The primary structure comprises 498 residues: Glutamyl-tRNA(Gln) amidotransferase subunit A (498 aa).

Catalysis depends on charge relay system residues lysine 85 and serine 160. Serine 184 (acyl-ester intermediate) is an active-site residue.

It belongs to the amidase family. GatA subfamily. Heterotrimer of A, B and C subunits.

It catalyses the reaction L-glutamyl-tRNA(Gln) + L-glutamine + ATP + H2O = L-glutaminyl-tRNA(Gln) + L-glutamate + ADP + phosphate + H(+). Allows the formation of correctly charged Gln-tRNA(Gln) through the transamidation of misacylated Glu-tRNA(Gln) in organisms which lack glutaminyl-tRNA synthetase. The reaction takes place in the presence of glutamine and ATP through an activated gamma-phospho-Glu-tRNA(Gln). In Mycolicibacterium vanbaalenii (strain DSM 7251 / JCM 13017 / BCRC 16820 / KCTC 9966 / NRRL B-24157 / PYR-1) (Mycobacterium vanbaalenii), this protein is Glutamyl-tRNA(Gln) amidotransferase subunit A.